The following is a 1940-amino-acid chain: Rho GTPase-activating protein 32 (1940 aa).

Residues 154 to 248 (SKELVFLVQI…LTWMEIDNKG (95 aa)) enclose the PX; atypical domain. One can recognise an SH3 domain in the interval 262-324 (PAIAAAHVIK…PSECVELIND (63 aa)). One can recognise a Rho-GAP domain in the interval 375 to 570 (CDLGEHLLNS…FILNHVEVLF (196 aa)). Disordered regions lie at residues 646-746 (FPSE…LSAS), 1035-1163 (RANQ…FSVT), 1219-1264 (FTTG…PPVR), 1430-1454 (KHPR…YTED), and 1675-1786 (RSRS…HSSA). Over residues 1047-1061 (PQGASASESPQELSH) the composition is skewed to polar residues. Low complexity-rich tracts occupy residues 1081-1094 (LALA…QASA) and 1145-1163 (SRKT…FSVT). Over residues 1691 to 1707 (ETKDVRYPGRTEGDERT) the composition is skewed to basic and acidic residues. Residues 1725–1734 (PQKQSGSSRS) show a composition bias toward polar residues. Basic and acidic residues predominate over residues 1736–1755 (MQHDISTEQHSQDTLHRQPS).

It belongs to the PX domain-containing GAP family.

Its subcellular location is the cytoplasm. It is found in the membrane. It localises to the cell membrane. Its function is as follows. GTPase-activating protein (GAP) promoting GTP hydrolysis on RHOA, CDC42 and RAC1 small GTPases. The sequence is that of Rho GTPase-activating protein 32 (arhgap32) from Xenopus laevis (African clawed frog).